The chain runs to 289 residues: tRNA pseudouridine synthase B (289 aa).

The active-site Nucleophile is the Asp-55. The interval 243–289 is disordered; sequence PGGVLAQHEREGSRALDSAAGNAEHDREEARIADNNREDRSRQHADR. A compositionally biased stretch (basic and acidic residues) spans 265 to 289; that stretch reads AEHDREEARIADNNREDRSRQHADR.

Belongs to the pseudouridine synthase TruB family. Type 1 subfamily.

It catalyses the reaction uridine(55) in tRNA = pseudouridine(55) in tRNA. Functionally, responsible for synthesis of pseudouridine from uracil-55 in the psi GC loop of transfer RNAs. This chain is tRNA pseudouridine synthase B, found in Chlorobium luteolum (strain DSM 273 / BCRC 81028 / 2530) (Pelodictyon luteolum).